The chain runs to 495 residues: F(420)H(2) dehydrogenase subunit M (495 aa).

15 helical membrane-spanning segments follow: residues methionine 1–phenylalanine 21, leucine 27–tyrosine 47, methionine 57–isoleucine 77, valine 80–tryptophan 100, asparagine 108–leucine 128, phenylalanine 130–leucine 150, phenylalanine 163–tyrosine 183, isoleucine 215–tryptophan 235, isoleucine 249–leucine 269, leucine 277–alanine 297, methionine 315–phenylalanine 335, phenylalanine 338–alanine 358, valine 378–alanine 398, valine 412–methionine 432, and isoleucine 450–leucine 470.

It belongs to the complex I subunit 4 family. In terms of assembly, the FPO complex is composed of at least 13 different subunits. FpoA, FpoH, FpoJ, FpoK, FpoL, FpoM and FpoN proteins constitute the membrane sector of the complex.

It localises to the cell membrane. The enzyme catalyses methanophenazine + reduced coenzyme F420-(gamma-L-Glu)(n) = dihydromethanophenazine + oxidized coenzyme F420-(gamma-L-Glu)(n) + H(+). Functionally, component of the F(420)H(2) dehydrogenase (FPO complex) which is part of the energy-conserving F(420)H(2):heterodisulfide oxidoreductase system. The membrane-bound electron transfer system of the complex plays an important role in the metabolism of methylotrophic methanogens when the organisms grow on methanol or methylamines. Catalyzes the oxidation of methanophenazine to dihydromethanophenazine. It shuttles electrons from F(420)H(2), via FAD and iron-sulfur (Fe-S) centers, to methanophenazine (an electron carrier in the membrane). It couples the redox reaction to proton translocation (for every two electrons transferred, two hydrogen ions are translocated across the cytoplasmic membrane), and thus conserves the redox energy in a proton gradient. It also catalyzes the oxidation of F(420)H(2) with quinones such as 2,3-dimethyl-1,4-naphthoquinone, 2-methyl-1,4-naphthoquinone and tetramethyl-p-benzoquinone. The sequence is that of F(420)H(2) dehydrogenase subunit M (fpoM) from Methanosarcina mazei (strain ATCC BAA-159 / DSM 3647 / Goe1 / Go1 / JCM 11833 / OCM 88) (Methanosarcina frisia).